The primary structure comprises 274 residues: MSDIIKEIEEAWQIKENILNDSLKLIKLKSILNESIKSLNQGIIRVCEKQGNQWKVNEWVKKAILLYFITTESQLYNNNYNSWYDKVAPKFPADTDKNIFKEAAIRKVPGAIVRTGTYIAKNVVIMPSFINIGAYIDEGTMIDTWATIGSCAQIGKNCHISGGSGIGGVLEPLQAKPVIIEDNCFVGARSEIAEGIIVEEGSVISMGVFIGSSTKIVYRDTGKIIYGRIPAYSVVVPGVLPSPEAGKPGLYCVVIVKQVDKTTRAKVSINDLLR.

Residues arginine 106 and aspartate 143 each coordinate substrate.

This sequence belongs to the transferase hexapeptide repeat family. Homotrimer.

It is found in the cytoplasm. It catalyses the reaction (S)-2,3,4,5-tetrahydrodipicolinate + succinyl-CoA + H2O = (S)-2-succinylamino-6-oxoheptanedioate + CoA. It participates in amino-acid biosynthesis; L-lysine biosynthesis via DAP pathway; LL-2,6-diaminopimelate from (S)-tetrahydrodipicolinate (succinylase route): step 1/3. This is 2,3,4,5-tetrahydropyridine-2,6-dicarboxylate N-succinyltransferase from Rickettsia typhi (strain ATCC VR-144 / Wilmington).